Reading from the N-terminus, the 456-residue chain is Argininosuccinate lyase (456 aa).

It belongs to the lyase 1 family. Argininosuccinate lyase subfamily.

The protein localises to the cytoplasm. It catalyses the reaction 2-(N(omega)-L-arginino)succinate = fumarate + L-arginine. It participates in amino-acid biosynthesis; L-arginine biosynthesis; L-arginine from L-ornithine and carbamoyl phosphate: step 3/3. In Carboxydothermus hydrogenoformans (strain ATCC BAA-161 / DSM 6008 / Z-2901), this protein is Argininosuccinate lyase.